An 84-amino-acid polypeptide reads, in one-letter code: Xenoxin-1 (84 aa).

The first 18 residues, 1 to 18 (MRYAIVFFLVCVITLGEA), serve as a signal peptide directing secretion. Disulfide bonds link C21-C42, C35-C55, C61-C76, and C77-C82.

As to expression, expressed by the skin dorsal glands.

It localises to the secreted. In terms of biological role, lacks alpha-neurotoxic activity, has apparently no antibacterial activity, nor anti-coagulant potency. This chain is Xenoxin-1 (xenoxin-1), found in Xenopus laevis (African clawed frog).